The chain runs to 402 residues: 1-deoxy-D-xylulose 5-phosphate reductoisomerase (402 aa).

NADPH-binding residues include T13, G14, S15, I16, and N126. Residue K127 participates in 1-deoxy-D-xylulose 5-phosphate binding. E128 lines the NADPH pocket. D152 lines the Mn(2+) pocket. Positions 153, 154, 188, and 211 each coordinate 1-deoxy-D-xylulose 5-phosphate. Residue E154 participates in Mn(2+) binding. G217 serves as a coordination point for NADPH. 1-deoxy-D-xylulose 5-phosphate contacts are provided by S224, N229, K230, and E233. E233 provides a ligand contact to Mn(2+).

It belongs to the DXR family. Requires Mg(2+) as cofactor. Mn(2+) is required as a cofactor.

The enzyme catalyses 2-C-methyl-D-erythritol 4-phosphate + NADP(+) = 1-deoxy-D-xylulose 5-phosphate + NADPH + H(+). It participates in isoprenoid biosynthesis; isopentenyl diphosphate biosynthesis via DXP pathway; isopentenyl diphosphate from 1-deoxy-D-xylulose 5-phosphate: step 1/6. Functionally, catalyzes the NADPH-dependent rearrangement and reduction of 1-deoxy-D-xylulose-5-phosphate (DXP) to 2-C-methyl-D-erythritol 4-phosphate (MEP). This is 1-deoxy-D-xylulose 5-phosphate reductoisomerase from Psychrobacter cryohalolentis (strain ATCC BAA-1226 / DSM 17306 / VKM B-2378 / K5).